We begin with the raw amino-acid sequence, 197 residues long: Large ribosomal subunit protein uL13B (197 aa).

The residue at position 193 (S193) is a Phosphoserine.

The protein belongs to the universal ribosomal protein uL13 family. Component of the large ribosomal subunit (LSU). Mature yeast ribosomes consist of a small (40S) and a large (60S) subunit. The 40S small subunit contains 1 molecule of ribosomal RNA (18S rRNA) and at least 33 different proteins. The large 60S subunit contains 3 rRNA molecules (25S, 5.8S and 5S rRNA) and at least 46 different proteins.

Its subcellular location is the cytoplasm. In terms of biological role, component of the ribosome, a large ribonucleoprotein complex responsible for the synthesis of proteins in the cell. The small ribosomal subunit (SSU) binds messenger RNAs (mRNAs) and translates the encoded message by selecting cognate aminoacyl-transfer RNA (tRNA) molecules. The large subunit (LSU) contains the ribosomal catalytic site termed the peptidyl transferase center (PTC), which catalyzes the formation of peptide bonds, thereby polymerizing the amino acids delivered by tRNAs into a polypeptide chain. The nascent polypeptides leave the ribosome through a tunnel in the LSU and interact with protein factors that function in enzymatic processing, targeting, and the membrane insertion of nascent chains at the exit of the ribosomal tunnel. The sequence is that of Large ribosomal subunit protein uL13B (rpl1601) from Schizosaccharomyces pombe (strain 972 / ATCC 24843) (Fission yeast).